A 184-amino-acid polypeptide reads, in one-letter code: Photosystem I assembly protein Ycf4 (184 aa).

Helical transmembrane passes span 19-39 (ISNF…LLVG) and 57-77 (IIFF…LFIS).

The protein belongs to the Ycf4 family.

Its subcellular location is the plastid. It localises to the chloroplast thylakoid membrane. In terms of biological role, seems to be required for the assembly of the photosystem I complex. The chain is Photosystem I assembly protein Ycf4 from Nicotiana sylvestris (Wood tobacco).